We begin with the raw amino-acid sequence, 114 residues long: Large ribosomal subunit protein uL22 (114 aa).

It belongs to the universal ribosomal protein uL22 family. In terms of assembly, part of the 50S ribosomal subunit.

Its function is as follows. This protein binds specifically to 23S rRNA; its binding is stimulated by other ribosomal proteins, e.g. L4, L17, and L20. It is important during the early stages of 50S assembly. It makes multiple contacts with different domains of the 23S rRNA in the assembled 50S subunit and ribosome. In terms of biological role, the globular domain of the protein is located near the polypeptide exit tunnel on the outside of the subunit, while an extended beta-hairpin is found that lines the wall of the exit tunnel in the center of the 70S ribosome. This Aeromonas salmonicida (strain A449) protein is Large ribosomal subunit protein uL22.